Consider the following 311-residue polypeptide: MADALNVGVNLEAFSQAIHCIQALRSSVTRVFDCLKDGMKNKESQEARERAFVSEFQDNLHCVNRDLNELERLSNLVGKPSENHPLHNSGLLSLDPVHDKTPLYSQLLQAYKWSNKLQFHAGLASGLLNQQSLKRSANQMGVSAKRRPKVQPTTLALPPQYIDDVISRIDRMFPEMTIQLSRPNGSSAMLLVTLGKVLKVIVVMRSLFIDRTIVKGYNENVYTEDGKLDIWSKSNYQVFQKVTDHATTALLHYQLPQMPDVVVRSFMTWLRSYIKLFQAPCQRCGKFLQDGLPPTWRDFRTLEAFHDSCRQ.

The protein belongs to the Mediator complex subunit 27 family. Component of the Mediator complex.

The protein resides in the nucleus. Component of the Mediator complex, a coactivator involved in the regulated transcription of nearly all RNA polymerase II-dependent genes. Mediator functions as a bridge to convey information from gene-specific regulatory proteins to the basal RNA polymerase II transcription machinery. Mediator is recruited to promoters by direct interactions with regulatory proteins and serves as a scaffold for the assembly of a functional preinitiation complex with RNA polymerase II and the general transcription factors. The sequence is that of Mediator of RNA polymerase II transcription subunit 27 (med27) from Xenopus tropicalis (Western clawed frog).